The primary structure comprises 391 residues: Cyclin-B1-2 (391 aa).

Belongs to the cyclin family. Cyclin AB subfamily.

In Oryza sativa subsp. japonica (Rice), this protein is Cyclin-B1-2 (CYCB1-2).